Consider the following 170-residue polypeptide: Protein SprT (170 aa).

The SprT-like domain occupies 25–165 (SEQFFDRTFA…QYCKGRLEPV (141 aa)). A Zn(2+)-binding site is contributed by histidine 78. Residue glutamate 79 is part of the active site. Histidine 82 is a binding site for Zn(2+).

The protein belongs to the SprT family. It depends on Zn(2+) as a cofactor.

It localises to the cytoplasm. The polypeptide is Protein SprT (Actinobacillus succinogenes (strain ATCC 55618 / DSM 22257 / CCUG 43843 / 130Z)).